Reading from the N-terminus, the 540-residue chain is NXPE family member 1 (540 aa).

An N-terminal signal peptide occupies residues 1 to 22 (MLHKYLKLICLLAAICVLCIIS). Residues N24, N42, N87, N155, N205, and N291 are each glycosylated (N-linked (GlcNAc...) asparagine).

This sequence belongs to the NXPE family. In terms of tissue distribution, intestine, and to a lesser extent in kidney.

Its subcellular location is the secreted. In Oryctolagus cuniculus (Rabbit), this protein is NXPE family member 1 (NXPE1).